The primary structure comprises 241 residues: Uridylate kinase (241 aa).

K11–G14 lines the ATP pocket. The interval G19–G24 is involved in allosteric activation by GTP. A UMP-binding site is contributed by G53. Positions 54 and 58 each coordinate ATP. UMP contacts are provided by residues D74 and T135–T142. ATP-binding residues include T162, Y168, and D171.

This sequence belongs to the UMP kinase family. In terms of assembly, homohexamer.

It is found in the cytoplasm. The catalysed reaction is UMP + ATP = UDP + ADP. The protein operates within pyrimidine metabolism; CTP biosynthesis via de novo pathway; UDP from UMP (UMPK route): step 1/1. Its activity is regulated as follows. Allosterically activated by GTP. Inhibited by UTP. Functionally, catalyzes the reversible phosphorylation of UMP to UDP. The polypeptide is Uridylate kinase (Wolinella succinogenes (strain ATCC 29543 / DSM 1740 / CCUG 13145 / JCM 31913 / LMG 7466 / NCTC 11488 / FDC 602W) (Vibrio succinogenes)).